A 301-amino-acid polypeptide reads, in one-letter code: Ribosomal protein L11 methyltransferase (301 aa).

Threonine 146, glycine 167, aspartate 189, and asparagine 234 together coordinate S-adenosyl-L-methionine.

It belongs to the methyltransferase superfamily. PrmA family.

The protein resides in the cytoplasm. It carries out the reaction L-lysyl-[protein] + 3 S-adenosyl-L-methionine = N(6),N(6),N(6)-trimethyl-L-lysyl-[protein] + 3 S-adenosyl-L-homocysteine + 3 H(+). Methylates ribosomal protein L11. The polypeptide is Ribosomal protein L11 methyltransferase (Acinetobacter baumannii (strain SDF)).